The following is a 244-amino-acid chain: Chalcone--flavanone isomerase (244 aa).

Substrate is bound by residues T45, N110, and S187.

Belongs to the chalcone isomerase family.

The enzyme catalyses a chalcone = a flavanone.. It functions in the pathway secondary metabolite biosynthesis; flavonoid biosynthesis. Functionally, catalyzes the intramolecular cyclization of bicyclic chalcones into tricyclic (S)-flavanones. Responsible for the isomerization of 4,2',4',6'-tetrahydroxychalcone (also termed chalcone) into naringenin. The polypeptide is Chalcone--flavanone isomerase (CHI) (Nicotiana tabacum (Common tobacco)).